We begin with the raw amino-acid sequence, 396 residues long: uncharacterized protein (396 aa).

A run of 11 helical transmembrane segments spans residues 7-27 (SDDVWVLWGFIAVWAAVSIGL), 36-56 (AVSGAIIALAGAMVFTNVGVL), 62-82 (VYDTVWSYVVPLAIPLLLFQI), 94-114 (LLFIFLISSVGTVLGSILAFF), 159-179 (VVADNFMMALLFFILISIPAL), 218-238 (IAFNAGAAFALVAVSMKVSGY), 250-270 (GTLGDQYLVLTSLTVLIIFLF), 285-305 (TFLIYLFFVVIGIPADLRLIV), 310-330 (LILLFVFIIAISNLAVSLAAG), 340-360 (ILLAVNATVGGPTTAAAMAIA), and 367-387 (VAPIMLVGTLGYLIGNYVGTF).

The protein localises to the cell membrane. This is an uncharacterized protein from Bacillus subtilis (strain 168).